The following is a 1647-amino-acid chain: Ras GTPase-activating-like protein IQG1 (1647 aa).

The disordered stretch occupies residues 18-51 (DTTATTTTTTTSNVLQPSNRLNSPTKFNRKSLDN). Over residues 19–28 (TTATTTTTTT) the composition is skewed to low complexity. Polar residues predominate over residues 29-43 (SNVLQPSNRLNSPTK). Phosphoserine is present on serine 48. Residues threonine 66, threonine 72, and threonine 82 each carry the phosphothreonine modification. Serine 83, serine 91, and serine 139 each carry phosphoserine. A compositionally biased stretch (polar residues) spans 143–162 (FNTQSNVHTPLKQLNQPIGT). The disordered stretch occupies residues 143–175 (FNTQSNVHTPLKQLNQPIGTPSSSSLSPAKNAS). Low complexity predominate over residues 163–175 (PSSSSLSPAKNAS). Phosphoserine occurs at positions 165, 167, and 169. One can recognise a Calponin-homology (CH) domain in the interval 184–291 (LCRIEAIKQW…FCLHALSYIL (108 aa)). Residues 326–427 (PLPNFSSADT…STSNAKLELH (102 aa)) form a disordered region. Low complexity predominate over residues 342 to 355 (TSNNNSSTTSATAA). Phosphothreonine is present on threonine 367. Residues 368–379 (PSPLKRPQQLQK) are compositionally biased toward low complexity. Serine 369 is subject to Phosphoserine. Composition is skewed to basic and acidic residues over residues 380 to 392 (KQLE…KPEL) and 402 to 413 (ISRDDPFTDRVD). Residues serine 433 and serine 440 each carry the phosphoserine modification. 9 IQ domains span residues 467 to 478 (FQSLARGAVFRY), 528 to 539 (LQSIIRKNFVIN), 556 to 567 (LQSLIRGKLTRD), 586 to 597 (FQSLVRMKSIYS), 616 to 627 (LQSIARSQLYHR), 642 to 653 (IQSIIRRNAVIE), 672 to 683 (LQSIARGGVART), 734 to 745 (VQTLFRGVLSRY), and 764 to 775 (LQSVARGKLMRG). Residues 841-919 (LSDLKDLIIE…KKIELWQTLF (79 aa)) adopt a coiled-coil conformation. One can recognise a Ras-GAP domain in the interval 958-1223 (PVRDSSITYH…DTVKSIISQA (266 aa)). 5 positions are modified to phosphoserine: serine 1064, serine 1068, serine 1088, serine 1383, and serine 1385.

Interacts with myosin MYO1 and its light chain MLC1. Interacts with BNI1. Interacts with BNR1. Interacts with CLB2. Interacts with CLB4. Interacts with CDC28. Post-translationally, hyperphosphorylated. Phosphorylation is cell cycle-dependent and peaks at the time of cytokinesis. Contains 21 consensus sites for cyclin-dependent kinases (CDKs). At least some of them are phosphorylated by the CLB2-CDC28 kinase complex. Mutation of 15 of the phosphorylation sites to Ala caused both premature assembly and delayed disassembly of the actomyosin ring, blocked interaction with the actin-nucleating proteins BNI1 and BNR1, and resulted in defects in cytokinesis.

The protein resides in the bud neck. Required for the assembly and the contraction of the actomyosin ring at the bud neck during cytokinesis. This is Ras GTPase-activating-like protein IQG1 (IQG1) from Candida albicans (strain SC5314 / ATCC MYA-2876) (Yeast).